A 316-amino-acid polypeptide reads, in one-letter code: MTRGNEKEEAPPQAKILGSFPTGIAPYAELMRVHRLLGFYLNTSPYLVGVAFCASISPTKIPITVLLHRTILLSIWSIFLRSAGCVWDDLIDMDLDSQISRTRTRPLPRGAVSPKNAFLLTVTLFACGGSVLIYLPWPCAVDCLIITFFALLYPFGKRFTDYPQITLVNIGWAIPMAMHSLGLDPLSQMKPTVCMFLFIGLVIIMIDVIYSRQDTEEDLKVGVKSMAVRFRESIELLSYSLLYASTGFLAMAGFFTGLGLSFFVVSVGGHFCGFWVLLKATRVGNSYGVESYAKSAFFLATLFWLFGFVIEYCLRN.

Helical transmembrane passes span 36 to 56 (LLGF…CASI), 60 to 80 (KIPI…SIFL), 131 to 151 (VLIY…FFAL), 163 to 183 (PQIT…SLGL), 191 to 211 (PTVC…VIYS), 247 to 267 (GFLA…VVSV), and 294 to 314 (KSAF…EYCL).

The protein belongs to the UbiA prenyltransferase family. Requires Mg(2+) as cofactor.

The protein resides in the membrane. It catalyses the reaction 3,5-dimethylorsellinate + (2E,6E)-farnesyl diphosphate = (3R)-3-farnesyl-6-hydroxy-2,3,5-trimethyl-4-oxocyclohexa-1,5-diene-1-carboxylate + diphosphate + H(+). Its pathway is secondary metabolite biosynthesis; terpenoid biosynthesis. Its function is as follows. Prenytransferase; part of the gene cluster that mediates the biosynthesis of andrastins, meroterpenoid compounds that exhibit inhibitory activity against ras farnesyltransferase, suggesting that they could be promising leads for antitumor agents. The first step of the pathway is the synthesis of 3,5-dimethylorsellinic acid (DMOA) by the polyketide synthase adrD via condensation of one acetyl-CoA starter unit with 3 malonyl-CoA units and 2 methylations. DMAO is then converted to farnesyl-DMAO by the prenyltransferase adrG. The methyltransferase adrK catalyzes the methylation of the carboxyl group of farnesyl-DMAO to farnesyl-DMAO methyl ester which is further converted to epoxyfarnesyl-DMAO methyl ester by the FAD-dependent monooxygenase adrH. The terpene cyclase adrI then catalyzes the carbon skeletal rearrangement to generate the andrastin E, the first compound in the pathway having the andrastin scaffold, with the tetracyclic ring system. The post-cyclization tailoring enzymes adrF, adrE, adrJ, and adrA, are involved in the conversion of andrastin E into andrastin A. The short chain dehydrogenase adrF is responsible for the oxidation of the C-3 a hydroxyl group of andrastin E to yield the corresponding ketone, andrastin D. The ketoreductase adrE stereoselectively reduces the carbonyl moiety to reverse the stereochemistry of the C-3 position to yield andrastin F. The acetyltransferase adrJ is the acetyltransferase that attaches the acetyl group to the C-3 hydroxyl group of andrastin F to yield andrastin C. Finally, the cytochrome P450 monooxygenase adrA catalyzes two sequential oxidation reactions of the C-23 methyl group, to generate the corresponding alcohol andrastin B, and aldehyde andrastin A. This chain is Prenytransferase adrG, found in Penicillium roqueforti.